A 518-amino-acid chain; its full sequence is Putative cysteine ligase BshC (518 aa).

Residues 404–474 adopt a coiled-coil conformation; that stretch reads AAASAERLAA…RARQLTRLKR (71 aa).

This sequence belongs to the BshC family.

The chain is Putative cysteine ligase BshC from Deinococcus geothermalis (strain DSM 11300 / CIP 105573 / AG-3a).